A 373-amino-acid chain; its full sequence is Peptide chain release factor 2 (373 aa).

Q252 carries the post-translational modification N5-methylglutamine.

Belongs to the prokaryotic/mitochondrial release factor family. Post-translationally, methylated by PrmC. Methylation increases the termination efficiency of RF2.

It localises to the cytoplasm. Functionally, peptide chain release factor 2 directs the termination of translation in response to the peptide chain termination codons UGA and UAA. This is Peptide chain release factor 2 from Staphylococcus saprophyticus subsp. saprophyticus (strain ATCC 15305 / DSM 20229 / NCIMB 8711 / NCTC 7292 / S-41).